The chain runs to 458 residues: Protein adenylyltransferase FICD (458 aa).

The Cytoplasmic segment spans residues methionine 1–arginine 23. Residues phenylalanine 24–leucine 44 traverse the membrane as a helical; Signal-anchor for type II membrane protein segment. Topologically, residues glycine 45 to proline 458 are lumenal. Threonine 80 is modified (O-AMP-threonine; by autocatalysis). 2 TPR repeats span residues alanine 106–phenylalanine 139 and valine 140–histidine 173. Threonine 183 carries the post-translational modification O-AMP-threonine; by autocatalysis. An Inhibitory (S/T)XXXE(G/N) motif motif is present at residues threonine 230–glycine 235. Glutamate 234 contacts ATP. N-linked (GlcNAc...) asparagine glycosylation occurs at asparagine 275. The Fido domain occupies valine 285–lysine 420. Valine 316 to histidine 319 is a binding site for ATP. The active site involves histidine 363. ATP-binding positions include aspartate 367–arginine 374, tyrosine 399–tyrosine 400, and asparagine 407.

It belongs to the fic family. In terms of assembly, homodimer. Interacts with HD. The cofactor is Mg(2+). Requires Mn(2+) as cofactor. In terms of processing, auto-AMPylated in vitro.

The protein resides in the endoplasmic reticulum membrane. It carries out the reaction L-tyrosyl-[protein] + ATP = O-(5'-adenylyl)-L-tyrosyl-[protein] + diphosphate. It catalyses the reaction 3-O-(5'-adenylyl)-L-threonyl-[protein] + H2O = L-threonyl-[protein] + AMP + H(+). The enzyme catalyses L-threonyl-[protein] + ATP = 3-O-(5'-adenylyl)-L-threonyl-[protein] + diphosphate. The side chain of Glu-234 determines which of the two opposing activities (AMPylase or de-AMPylase) will take place. In response to endoplasmic reticulum stress, mediates de-AMPylase activity. Adenylyltransferase activity is inhibited by the inhibitory helix present at the N-terminus: Glu-234 binds ATP and competes with ATP-binding at Arg-374, thereby preventing adenylyltransferase activity. In unstressed cells, disengagement of Glu-234 promotes adenylyltransferase activity. Activation dissociates ATP-binding from Glu-234, allowing ordered binding of the entire ATP moiety with the alpha-phosphate in an orientation that is productive for accepting an incoming target hydroxyl side chain. Functionally, protein that can both mediate the addition of adenosine 5'-monophosphate (AMP) to specific residues of target proteins (AMPylation), and the removal of the same modification from target proteins (de-AMPylation), depending on the context. The side chain of Glu-231 determines which of the two opposing activities (AMPylase or de-AMPylase) will take place. Acts as a key regulator of the ERN1/IRE1-mediated unfolded protein response (UPR) by mediating AMPylation or de-AMPylation of HSPA5/BiP. In unstressed cells, acts as an adenylyltransferase by mediating AMPylation of HSPA5/BiP at 'Thr-518', thereby inactivating it. In response to endoplasmic reticulum stress, acts as a phosphodiesterase by mediating removal of ATP (de-AMPylation) from HSPA5/BiP at 'Thr-518', leading to restore HSPA5/BiP activity. Although it is able to AMPylate RhoA, Rac and Cdc42 Rho GTPases in vitro, Rho GTPases do not constitute physiological substrates. The polypeptide is Protein adenylyltransferase FICD (Mus musculus (Mouse)).